Reading from the N-terminus, the 48-residue chain is Disintegrin accutin (48 aa).

Glutamine 1 is subject to Pyrrolidone carboxylic acid. Residues 1-48 (QGAQCTAGPCCWPCKFLKEGTICRRARGDDLDDYCNGISADCPRNPYY) enclose the Disintegrin domain. 3 disulfide bridges follow: cysteine 5-cysteine 11, cysteine 10-cysteine 35, and cysteine 23-cysteine 42. The Cell attachment site motif lies at 27–29 (RGD).

This sequence belongs to the venom metalloproteinase (M12B) family. P-II subfamily. P-IIa sub-subfamily. Monomer (disintegrin). As to expression, expressed by the venom gland.

The protein localises to the secreted. Its function is as follows. Inhibit human platelet aggregation induced by ADP, collagen, thrombin or the thromboxane analog U46619 in platelet suspension with IC(50) values of 66-267 nM. Acts by inhibiting fibrinogen interaction with platelet receptors GPIIb/GPIIIa (ITGA2B/ITGB3). It also inhibits angiogenesis in vivo and in vitro by blocking integrin alpha-V/beta-3 (ITGAV/ITGB3) of endothelial cells and by inducing apoptosis. The protein is Disintegrin accutin of Deinagkistrodon acutus (Hundred-pace snake).